The following is a 172-amino-acid chain: MAKMQAKVQQDERDDGLREKMISVNRVTKVVKGGRILGFAALTVVGDGDGRIGMGKGKAKEVPVAVQKAMDEARRKMVKVALKNGTLQHEVVGRHGAAKVLMMPAKEGTGVIAGGPMRAIFEVMGVTNVVTKSHGSTNPYNMVRATLDGLTKMSTPAEIAAKRGKSVEDILG.

The S5 DRBM domain maps to L17 to V80.

This sequence belongs to the universal ribosomal protein uS5 family. As to quaternary structure, part of the 30S ribosomal subunit. Contacts proteins S4 and S8.

With S4 and S12 plays an important role in translational accuracy. Its function is as follows. Located at the back of the 30S subunit body where it stabilizes the conformation of the head with respect to the body. This is Small ribosomal subunit protein uS5 from Cupriavidus metallidurans (strain ATCC 43123 / DSM 2839 / NBRC 102507 / CH34) (Ralstonia metallidurans).